A 386-amino-acid polypeptide reads, in one-letter code: Putative 8-amino-7-oxononanoate synthase 2 (386 aa).

Arg21 is a substrate binding site. A pyridoxal 5'-phosphate-binding site is contributed by 104-105; sequence GY. A substrate-binding site is contributed by His129. Residues Ser176, 201–204, and 230–233 each bind pyridoxal 5'-phosphate; these read DDAH and TLSK. Lys233 carries the post-translational modification N6-(pyridoxal phosphate)lysine.

It belongs to the class-II pyridoxal-phosphate-dependent aminotransferase family. BioF subfamily. Homodimer. The cofactor is pyridoxal 5'-phosphate.

The enzyme catalyses 6-carboxyhexanoyl-[ACP] + L-alanine + H(+) = (8S)-8-amino-7-oxononanoate + holo-[ACP] + CO2. Its pathway is cofactor biosynthesis; biotin biosynthesis. Functionally, catalyzes the decarboxylative condensation of pimeloyl-[acyl-carrier protein] and L-alanine to produce 8-amino-7-oxononanoate (AON), [acyl-carrier protein], and carbon dioxide. The polypeptide is Putative 8-amino-7-oxononanoate synthase 2 (bioF) (Bacillus velezensis (strain DSM 23117 / BGSC 10A6 / LMG 26770 / FZB42) (Bacillus amyloliquefaciens subsp. plantarum)).